A 516-amino-acid chain; its full sequence is 7-chloro-L-tryptophan 6-halogenase KtzR (516 aa).

Glycine 6, threonine 8, alanine 9, glutamate 42, and alanine 43 together coordinate FAD. The active site involves lysine 71. Position 195 (valine 195) interacts with FAD. The chloride site is built by threonine 357 and glycine 358. Residue isoleucine 359 coordinates FAD.

This sequence belongs to the flavin-dependent halogenase family. Bacterial tryptophan halogenase subfamily.

It catalyses the reaction 7-chloro-L-tryptophan + FADH2 + chloride + O2 = 6,7-dichloro-L-tryptophan + FAD + 2 H2O. In terms of biological role, involved in the biosynthesis of kutznerides, actinomycete-derived antifungal and antimicrobial cyclic hexadepsipeptides. Together with KtzQ, catalyzes the regiospecific dichlorination of L-tryptophan (L-Trp) to produce 6,7-dichloro-L-tryptophan. KtzR catalyzes the chlorination of 7-chloro-L-tryptophan at C6 position to yield 6,7-dichloro-L-tryptophan. Can also use L-Trp as substrate and form 6-chloro-L-tryptophan, but has a 120-fold preference for 7-chloro-L-tryptophan over L-Trp. Cannot use piperazic acid or gamma,delta-dehydropiperazic acid. This chain is 7-chloro-L-tryptophan 6-halogenase KtzR, found in Kutzneria sp. (strain 744).